A 289-amino-acid polypeptide reads, in one-letter code: Serine/threonine-protein phosphatase Pgam5, mitochondrial (289 aa).

Residues 7–23 form a helical membrane-spanning segment; sequence FACGTGAGLLTFYLTKL.

It belongs to the phosphoglycerate mutase family. BPG-dependent PGAM subfamily. In terms of assembly, interacts with Pk92B/ASK1.

The protein resides in the mitochondrion outer membrane. The catalysed reaction is O-phospho-L-seryl-[protein] + H2O = L-seryl-[protein] + phosphate. The enzyme catalyses O-phospho-L-threonyl-[protein] + H2O = L-threonyl-[protein] + phosphate. Displays phosphatase activity for serine/threonine residues, and dephosphorylates and activates Pk92B kinase. Has apparently no phosphoglycerate mutase activity. The protein is Serine/threonine-protein phosphatase Pgam5, mitochondrial (Pgam5) of Drosophila pseudoobscura pseudoobscura (Fruit fly).